A 179-amino-acid polypeptide reads, in one-letter code: Large ribosomal subunit protein uL5 (179 aa).

The protein belongs to the universal ribosomal protein uL5 family. In terms of assembly, part of the 50S ribosomal subunit; part of the 5S rRNA/L5/L18/L25 subcomplex. Contacts the 5S rRNA and the P site tRNA. Forms a bridge to the 30S subunit in the 70S ribosome.

Its function is as follows. This is one of the proteins that bind and probably mediate the attachment of the 5S RNA into the large ribosomal subunit, where it forms part of the central protuberance. In the 70S ribosome it contacts protein S13 of the 30S subunit (bridge B1b), connecting the 2 subunits; this bridge is implicated in subunit movement. Contacts the P site tRNA; the 5S rRNA and some of its associated proteins might help stabilize positioning of ribosome-bound tRNAs. This is Large ribosomal subunit protein uL5 from Shewanella baltica (strain OS223).